The chain runs to 358 residues: Histidinol-phosphate aminotransferase (358 aa).

An N6-(pyridoxal phosphate)lysine modification is found at Lys-218.

The protein belongs to the class-II pyridoxal-phosphate-dependent aminotransferase family. Histidinol-phosphate aminotransferase subfamily. Homodimer. Pyridoxal 5'-phosphate serves as cofactor.

The catalysed reaction is L-histidinol phosphate + 2-oxoglutarate = 3-(imidazol-4-yl)-2-oxopropyl phosphate + L-glutamate. It functions in the pathway amino-acid biosynthesis; L-histidine biosynthesis; L-histidine from 5-phospho-alpha-D-ribose 1-diphosphate: step 7/9. The polypeptide is Histidinol-phosphate aminotransferase (Dehalococcoides mccartyi (strain ATCC BAA-2266 / KCTC 15142 / 195) (Dehalococcoides ethenogenes (strain 195))).